Reading from the N-terminus, the 462-residue chain is A-type ATP synthase subunit B (462 aa).

This sequence belongs to the ATPase alpha/beta chains family. As to quaternary structure, has multiple subunits with at least A(3), B(3), C, D, E, F, H, I and proteolipid K(x).

Its subcellular location is the cell membrane. Component of the A-type ATP synthase that produces ATP from ADP in the presence of a proton gradient across the membrane. The B chain is a regulatory subunit. In Methanococcus maripaludis (strain C6 / ATCC BAA-1332), this protein is A-type ATP synthase subunit B.